The following is a 145-amino-acid chain: Histone H2B.1, sperm (145 aa).

Residues 1–52 (MPSQKSPTKRSPTKRSPTKRSPQKGGKGGKGAKRGGKAGKRRRGVQVKRRRR) are disordered. 4 consecutive short sequence motifs (SPKK motif) follow at residues 6-9 (SPTK), 11-14 (SPTK), 16-19 (SPTK), and 21-24 (SPQK). Composition is skewed to basic residues over residues 7 to 22 (PTKRSPTKRSPTKRSP) and 30 to 52 (KGAKRGGKAGKRRRGVQVKRRRR). Residues Ser-16 and Ser-21 each carry the phosphoserine modification. Ser-132 carries an O-linked (GlcNAc) serine glycan. Lys-140 participates in a covalent cross-link: Glycyl lysine isopeptide (Lys-Gly) (interchain with G-Cter in ubiquitin).

This sequence belongs to the histone H2B family. In terms of assembly, the nucleosome is a histone octamer containing two molecules each of H2A, H2B, H3 and H4 assembled in one H3-H4 heterotetramer and two H2A-H2B heterodimers. The octamer wraps approximately 147 bp of DNA. Post-translationally, monoubiquitination of Lys-140 gives a specific tag for epigenetic transcriptional activation and is also prerequisite for histone H3 'Lys-4' and 'Lys-79' methylation. In terms of processing, phosphorylated on SPKK motifs 3 and 4; which may regulate DNA binding. Dephosphorylated during maturation of spermatids to mature sperm and rephosphorylated at fertilization. GlcNAcylation at Ser-132 promotes monoubiquitination of Lys-140. It fluctuates in response to extracellular glucose, and associates with transcribed genes.

It localises to the nucleus. The protein resides in the chromosome. In terms of biological role, core component of nucleosome. Nucleosomes wrap and compact DNA into chromatin, limiting DNA accessibility to the cellular machineries which require DNA as a template. Histones thereby play a central role in transcription regulation, DNA repair, DNA replication and chromosomal stability. DNA accessibility is regulated via a complex set of post-translational modifications of histones, also called histone code, and nucleosome remodeling. The sequence is that of Histone H2B.1, sperm from Parechinus angulosus (Angulate sea urchin).